The chain runs to 123 residues: Small ribosomal subunit protein uS13 (123 aa).

The segment at 94-123 (RRGLPVRGQHTKNNARTRKGPARAIAGKKK) is disordered.

This sequence belongs to the universal ribosomal protein uS13 family. As to quaternary structure, part of the 30S ribosomal subunit. Forms a loose heterodimer with protein S19. Forms two bridges to the 50S subunit in the 70S ribosome.

Located at the top of the head of the 30S subunit, it contacts several helices of the 16S rRNA. In the 70S ribosome it contacts the 23S rRNA (bridge B1a) and protein L5 of the 50S subunit (bridge B1b), connecting the 2 subunits; these bridges are implicated in subunit movement. Contacts the tRNAs in the A and P-sites. The polypeptide is Small ribosomal subunit protein uS13 (Oenococcus oeni (strain ATCC BAA-331 / PSU-1)).